Here is a 1064-residue protein sequence, read N- to C-terminus: Valine--tRNA ligase, mitochondrial (1064 aa).

The N-terminal 26 residues, 1–26 (MPHLPLASFRPPFWGLRHSRGLPRFH), are a transit peptide targeting the mitochondrion. The tract at residues 25 to 65 (FHSVSTQSEPHGSPISRRNREAKQKRLREKQATLETDIAGE) is disordered. Positions 42-56 (RNREAKQKRLREKQA) are enriched in basic and acidic residues. A 'HIGH' region motif is present at residues 146–156 (PNVTGSLHIGH). A 'KMSKS' region motif is present at residues 659-663 (KMSKS). Lysine 662 contributes to the ATP binding site.

It belongs to the class-I aminoacyl-tRNA synthetase family.

It localises to the mitochondrion. It catalyses the reaction tRNA(Val) + L-valine + ATP = L-valyl-tRNA(Val) + AMP + diphosphate. In terms of biological role, catalyzes the attachment of valine to tRNA(Val) in a two-step reaction: valine is first activated by ATP to form Val-AMP and then transferred to the acceptor end of tRNA(Val). This Macaca mulatta (Rhesus macaque) protein is Valine--tRNA ligase, mitochondrial (VARS2).